Reading from the N-terminus, the 94-residue chain is Aspartyl/glutamyl-tRNA(Asn/Gln) amidotransferase subunit C (94 aa).

Belongs to the GatC family. As to quaternary structure, heterotrimer of A, B and C subunits.

It catalyses the reaction L-glutamyl-tRNA(Gln) + L-glutamine + ATP + H2O = L-glutaminyl-tRNA(Gln) + L-glutamate + ADP + phosphate + H(+). The enzyme catalyses L-aspartyl-tRNA(Asn) + L-glutamine + ATP + H2O = L-asparaginyl-tRNA(Asn) + L-glutamate + ADP + phosphate + 2 H(+). Functionally, allows the formation of correctly charged Asn-tRNA(Asn) or Gln-tRNA(Gln) through the transamidation of misacylated Asp-tRNA(Asn) or Glu-tRNA(Gln) in organisms which lack either or both of asparaginyl-tRNA or glutaminyl-tRNA synthetases. The reaction takes place in the presence of glutamine and ATP through an activated phospho-Asp-tRNA(Asn) or phospho-Glu-tRNA(Gln). This Solidesulfovibrio magneticus (strain ATCC 700980 / DSM 13731 / RS-1) (Desulfovibrio magneticus) protein is Aspartyl/glutamyl-tRNA(Asn/Gln) amidotransferase subunit C.